We begin with the raw amino-acid sequence, 308 residues long: Ornithine carbamoyltransferase (308 aa).

Residues 55–58 (STRT), Gln82, Arg106, and 133–136 (HPCQ) each bind carbamoyl phosphate. L-ornithine contacts are provided by residues Asn164, Asp227, and 231-232 (SM). Residues 267–268 (CL) and Arg295 contribute to the carbamoyl phosphate site.

Belongs to the aspartate/ornithine carbamoyltransferase superfamily. OTCase family.

The protein resides in the cytoplasm. The enzyme catalyses carbamoyl phosphate + L-ornithine = L-citrulline + phosphate + H(+). It functions in the pathway amino-acid biosynthesis; L-arginine biosynthesis; L-arginine from L-ornithine and carbamoyl phosphate: step 1/3. Functionally, reversibly catalyzes the transfer of the carbamoyl group from carbamoyl phosphate (CP) to the N(epsilon) atom of ornithine (ORN) to produce L-citrulline. This chain is Ornithine carbamoyltransferase, found in Prochlorococcus marinus (strain MIT 9312).